The primary structure comprises 342 residues: Holliday junction branch migration complex subunit RuvB (342 aa).

A large ATPase domain (RuvB-L) region spans residues 1–181; the sequence is MENRMVTPFD…FGMLCAMEFY (181 aa). ATP-binding positions include Leu-20, Arg-21, Gly-62, Lys-65, Thr-66, Thr-67, 128–130, Arg-171, Tyr-181, and Arg-218; that span reads EDY. Position 66 (Thr-66) interacts with Mg(2+). The segment at 182–252 is small ATPAse domain (RuvB-S); that stretch reads TDEELMEIVV…GAKAALDLLE (71 aa). The tract at residues 255–342 is head domain (RuvB-H); the sequence is KEGLDKIDNK…KDNQVSIFNK (88 aa). DNA contacts are provided by Arg-310 and Arg-315.

The protein belongs to the RuvB family. Homohexamer. Forms an RuvA(8)-RuvB(12)-Holliday junction (HJ) complex. HJ DNA is sandwiched between 2 RuvA tetramers; dsDNA enters through RuvA and exits via RuvB. An RuvB hexamer assembles on each DNA strand where it exits the tetramer. Each RuvB hexamer is contacted by two RuvA subunits (via domain III) on 2 adjacent RuvB subunits; this complex drives branch migration. In the full resolvosome a probable DNA-RuvA(4)-RuvB(12)-RuvC(2) complex forms which resolves the HJ.

Its subcellular location is the cytoplasm. The catalysed reaction is ATP + H2O = ADP + phosphate + H(+). Functionally, the RuvA-RuvB-RuvC complex processes Holliday junction (HJ) DNA during genetic recombination and DNA repair, while the RuvA-RuvB complex plays an important role in the rescue of blocked DNA replication forks via replication fork reversal (RFR). RuvA specifically binds to HJ cruciform DNA, conferring on it an open structure. The RuvB hexamer acts as an ATP-dependent pump, pulling dsDNA into and through the RuvAB complex. RuvB forms 2 homohexamers on either side of HJ DNA bound by 1 or 2 RuvA tetramers; 4 subunits per hexamer contact DNA at a time. Coordinated motions by a converter formed by DNA-disengaged RuvB subunits stimulates ATP hydrolysis and nucleotide exchange. Immobilization of the converter enables RuvB to convert the ATP-contained energy into a lever motion, pulling 2 nucleotides of DNA out of the RuvA tetramer per ATP hydrolyzed, thus driving DNA branch migration. The RuvB motors rotate together with the DNA substrate, which together with the progressing nucleotide cycle form the mechanistic basis for DNA recombination by continuous HJ branch migration. Branch migration allows RuvC to scan DNA until it finds its consensus sequence, where it cleaves and resolves cruciform DNA. The chain is Holliday junction branch migration complex subunit RuvB from Clostridium botulinum (strain 657 / Type Ba4).